The sequence spans 242 residues: MEPKYQRILIKLSGEALAGEKGAGIDIPTVQAIAKEIAEVHVSGVQIALVIGGGNLWRGEPAADAGMDRVQADYTGMLGTVMNALVMADSLQHYGVDTRVQTAIPMQNVAEPYIRGRALRHLEKNRIVVFGAGIGSPYFSTDTTAALRAAEIEADAILMAKNGVDGVYNADPKKDANAVKFDELTHGEVIKRGLKIMDATASTLSMDNDIDLVVFNMNEAGNIQRVVFGEHIGTTVSNKVCD.

An ATP-binding site is contributed by 11–14 (KLSG). An involved in allosteric activation by GTP region spans residues 19–24 (GEKGAG). G53 contributes to the UMP binding site. Residues G54 and R58 each coordinate ATP. Residues D73 and 134–141 (IGSPYFST) each bind UMP. N162, Y168, and D171 together coordinate ATP.

The protein belongs to the UMP kinase family. As to quaternary structure, homohexamer.

It localises to the cytoplasm. The catalysed reaction is UMP + ATP = UDP + ADP. It functions in the pathway pyrimidine metabolism; CTP biosynthesis via de novo pathway; UDP from UMP (UMPK route): step 1/1. Allosterically activated by GTP. Inhibited by UTP. Its function is as follows. Catalyzes the reversible phosphorylation of UMP to UDP. The sequence is that of Uridylate kinase from Streptococcus pyogenes serotype M2 (strain MGAS10270).